The sequence spans 506 residues: Lysine--tRNA ligase (506 aa).

E416 and E423 together coordinate Mg(2+).

Belongs to the class-II aminoacyl-tRNA synthetase family. Homodimer. The cofactor is Mg(2+).

The protein resides in the cytoplasm. It carries out the reaction tRNA(Lys) + L-lysine + ATP = L-lysyl-tRNA(Lys) + AMP + diphosphate. This Xylella fastidiosa (strain 9a5c) protein is Lysine--tRNA ligase (lysS).